Reading from the N-terminus, the 85-residue chain is U4-theraphotoxin-Hhn1f (85 aa).

An N-terminal signal peptide occupies residues 1–22; the sequence is MKVTLIAILTCAAVLVLHTTAA. The propeptide occupies 23–48; that stretch reads EELEAESQLMEVGMPDTELAAVDEER. The cysteines at positions 71 and 82 are disulfide-linked.

The protein belongs to the neurotoxin 12 (Hwtx-2) family. 02 (Hwtx-2) subfamily. In terms of tissue distribution, expressed by the venom gland.

The protein localises to the secreted. Postsynaptic neurotoxin. This is U4-theraphotoxin-Hhn1f from Cyriopagopus hainanus (Chinese bird spider).